Here is a 178-residue protein sequence, read N- to C-terminus: Acireductone dioxygenase (178 aa).

The interval 1–22 is disordered; sequence MKAYWYDNKPGDQREPHDSGRP. The segment covering 9-22 has biased composition (basic and acidic residues); sequence KPGDQREPHDSGRP. Histidine 81, histidine 83, glutamate 87, and histidine 126 together coordinate Fe(2+). Positions 81, 83, 87, and 126 each coordinate Ni(2+).

The protein belongs to the acireductone dioxygenase (ARD) family. The cofactor is Fe(2+). It depends on Ni(2+) as a cofactor.

Its subcellular location is the cytoplasm. The protein localises to the nucleus. The catalysed reaction is 1,2-dihydroxy-5-(methylsulfanyl)pent-1-en-3-one + O2 = 4-methylsulfanyl-2-oxobutanoate + formate + 2 H(+). It carries out the reaction 1,2-dihydroxy-5-(methylsulfanyl)pent-1-en-3-one + O2 = 3-(methylsulfanyl)propanoate + CO + formate + 2 H(+). It participates in amino-acid biosynthesis; L-methionine biosynthesis via salvage pathway; L-methionine from S-methyl-5-thio-alpha-D-ribose 1-phosphate: step 5/6. Its function is as follows. Catalyzes 2 different reactions between oxygen and the acireductone 1,2-dihydroxy-3-keto-5-methylthiopentene (DHK-MTPene) depending upon the metal bound in the active site. Fe-containing acireductone dioxygenase (Fe-ARD) produces formate and 2-keto-4-methylthiobutyrate (KMTB), the alpha-ketoacid precursor of methionine in the methionine recycle pathway. Ni-containing acireductone dioxygenase (Ni-ARD) produces methylthiopropionate, carbon monoxide and formate, and does not lie on the methionine recycle pathway. The chain is Acireductone dioxygenase (adi1) from Emericella nidulans (strain FGSC A4 / ATCC 38163 / CBS 112.46 / NRRL 194 / M139) (Aspergillus nidulans).